The following is a 498-amino-acid chain: Minor fimbrium subunit Mfa1 (498 aa).

The signal sequence occupies residues 1-19 (MKLNKMFLVGALLSLGFAS). The N-palmitoyl cysteine moiety is linked to residue Cys-20. The S-diacylglycerol cysteine moiety is linked to residue Cys-20. Residues 20–50 (CSKEGNGPAPDSSSTADTHMSVSMSLPQHNR) constitute a propeptide that is removed on maturation. A disordered region spans residues 436 to 476 (SGNPFVPTDPDPNNPDTPDNPDTPDPEDPDTPNPEEPLPVQ).

It belongs to the bacteroidetes fimbrillin superfamily. FimA/Mfa1 family. In terms of assembly, structural component of the fimbrial stalk. Minor fimbriae are composed of a structural subunit, most often Mfa1, and the accessory subunits Mfa3, Mfa4 and Mfa5. Mfa1 interacts with Mfa2; this anchors the fimbrium in the membrane. Fimbrium assembly occurs by linear, head-to-tail oligomerization of fimbrial subunits. This is mediated via insertion of a C-terminal beta-strand from one subunit into a groove in the N-terminal domain of the following subunit.

The protein resides in the fimbrium. It localises to the cell outer membrane. Structural subunit of the minor fimbriae. These filamentous pili are attached to the cell surface; they mediate biofilm formation, adhesion onto host cells and onto other bacteria that are part of the oral microbiome. They play an important role in invasion of periodontal tissues and are recognized as major virulence factors. Mfa1 orthologs from different strains have highly divergent sequences, and this correlates with pathogenicity. The protein is Minor fimbrium subunit Mfa1 of Porphyromonas gingivalis (Bacteroides gingivalis).